A 661-amino-acid chain; its full sequence is tRNA uridine 5-carboxymethylaminomethyl modification enzyme MnmG (661 aa).

13 to 18 contributes to the FAD binding site; that stretch reads GGGHAG. 285–299 lines the NAD(+) pocket; it reads GPRYCPSVEDKINRF.

Belongs to the MnmG family. As to quaternary structure, homodimer. Heterotetramer of two MnmE and two MnmG subunits. The cofactor is FAD.

The protein localises to the cytoplasm. Functionally, NAD-binding protein involved in the addition of a carboxymethylaminomethyl (cmnm) group at the wobble position (U34) of certain tRNAs, forming tRNA-cmnm(5)s(2)U34. The polypeptide is tRNA uridine 5-carboxymethylaminomethyl modification enzyme MnmG (Acidovorax sp. (strain JS42)).